Consider the following 249-residue polypeptide: Probable transcriptional regulatory protein GOX1679 (249 aa).

This sequence belongs to the TACO1 family.

The protein localises to the cytoplasm. In Gluconobacter oxydans (strain 621H) (Gluconobacter suboxydans), this protein is Probable transcriptional regulatory protein GOX1679.